A 160-amino-acid polypeptide reads, in one-letter code: Cathelin-related peptide SC5 (160 aa).

An N-terminal signal peptide occupies residues 1 to 29 (METQRASLSLGRRSLWLLLLGLVLASASA). A propeptide spanning residues 30-131 (QALSYREAVL…DITCAEPQSV (102 aa)) is cleaved from the precursor. Disulfide bonds link Cys-86/Cys-97 and Cys-108/Cys-125.

This sequence belongs to the cathelicidin family.

It localises to the secreted. Functionally, broad spectrum bactericidal agent. The chain is Cathelin-related peptide SC5 from Ovis aries (Sheep).